A 220-amino-acid chain; its full sequence is Large ribosomal subunit protein uL3 (220 aa).

Positions 130–156 are disordered; it reads AIKRHGQSRGPMSHGSHFHRAPGSVGM.

Belongs to the universal ribosomal protein uL3 family. In terms of assembly, part of the 50S ribosomal subunit. Forms a cluster with proteins L14 and L19.

One of the primary rRNA binding proteins, it binds directly near the 3'-end of the 23S rRNA, where it nucleates assembly of the 50S subunit. This is Large ribosomal subunit protein uL3 from Staphylococcus aureus (strain Mu3 / ATCC 700698).